The sequence spans 294 residues: Metallophosphoesterase MPPED2 (294 aa).

Positions 65, 67, 86, 117, and 213 each coordinate Mn(2+). 117-118 (NH) contacts GMP. GMP-binding positions include 225-226 (KE) and 254-255 (HE). Position 254 (histidine 254) interacts with Mn(2+).

It belongs to the UPF0046 family. Homodimer. Mn(2+) serves as cofactor. Co(2+) is required as a cofactor. As to expression, expressed in fetal brain (at protein level). detected in fetal and adult brain.

With respect to regulation, inhibited by nmolar levels of AMP and GMP. Displays low metallophosphoesterase activity (in vitro). May play a role in the development of the nervous system. This is Metallophosphoesterase MPPED2 (Mpped2) from Rattus norvegicus (Rat).